The sequence spans 116 residues: Putative gamma-glutamylcyclotransferase PH0828 (116 aa).

Substrate is bound at residue 13-16 (YGTL). E76 serves as the catalytic Proton acceptor.

It belongs to the gamma-glutamylcyclotransferase family.

Functionally, putative gamma-glutamylcyclotransferase. The polypeptide is Putative gamma-glutamylcyclotransferase PH0828 (Pyrococcus horikoshii (strain ATCC 700860 / DSM 12428 / JCM 9974 / NBRC 100139 / OT-3)).